The sequence spans 386 residues: S-adenosylmethionine synthase (386 aa).

Residue His-16 participates in ATP binding. Residue Asp-18 participates in Mg(2+) binding. Glu-44 serves as a coordination point for K(+). Residues Glu-57 and Gln-100 each contribute to the L-methionine site. The tract at residues 100–110 (QSPDINQGVDR) is flexible loop. Residues 164–166 (DGK), 230–231 (KF), Asp-239, 245–246 (RK), Ala-262, and Lys-266 each bind ATP. Residue Asp-239 coordinates L-methionine. Lys-270 is a binding site for L-methionine.

Belongs to the AdoMet synthase family. In terms of assembly, homotetramer; dimer of dimers. Mg(2+) is required as a cofactor. Requires K(+) as cofactor.

Its subcellular location is the cytoplasm. The enzyme catalyses L-methionine + ATP + H2O = S-adenosyl-L-methionine + phosphate + diphosphate. The protein operates within amino-acid biosynthesis; S-adenosyl-L-methionine biosynthesis; S-adenosyl-L-methionine from L-methionine: step 1/1. Its function is as follows. Catalyzes the formation of S-adenosylmethionine (AdoMet) from methionine and ATP. The overall synthetic reaction is composed of two sequential steps, AdoMet formation and the subsequent tripolyphosphate hydrolysis which occurs prior to release of AdoMet from the enzyme. The sequence is that of S-adenosylmethionine synthase from Wolinella succinogenes (strain ATCC 29543 / DSM 1740 / CCUG 13145 / JCM 31913 / LMG 7466 / NCTC 11488 / FDC 602W) (Vibrio succinogenes).